A 465-amino-acid polypeptide reads, in one-letter code: Cysteine--tRNA ligase (465 aa).

C27 contacts Zn(2+). A 'HIGH' region motif is present at residues 29–39 (PTVYNFFHIGN). Positions 207, 232, and 236 each coordinate Zn(2+). The short motif at 264 to 268 (KMSKS) is the 'KMSKS' region element. K267 lines the ATP pocket.

The protein belongs to the class-I aminoacyl-tRNA synthetase family. As to quaternary structure, monomer. Zn(2+) serves as cofactor.

Its subcellular location is the cytoplasm. It catalyses the reaction tRNA(Cys) + L-cysteine + ATP = L-cysteinyl-tRNA(Cys) + AMP + diphosphate. The polypeptide is Cysteine--tRNA ligase (Clostridium botulinum (strain Okra / Type B1)).